The chain runs to 216 residues: MRGLRIAVPKGAIFEDALRALEAAGLPAGALRGNGRRLFHRAGGVEFIVSRPSDVPVFVEHGAADVGIVGKDVLEEQEPNVMELVDLGSGACRMVLAAPRERASQVERAIAHAEVVRVATKFPRTARRYFEEMGRQAEVIELHGSVELAPLVGLSECIVDLTATGTTLRENDLEVLDEISRSTARLIANRGSYRLRHAEIRGLLASVGREGRPVGG.

This sequence belongs to the ATP phosphoribosyltransferase family. Short subfamily. As to quaternary structure, heteromultimer composed of HisG and HisZ subunits.

The protein localises to the cytoplasm. The enzyme catalyses 1-(5-phospho-beta-D-ribosyl)-ATP + diphosphate = 5-phospho-alpha-D-ribose 1-diphosphate + ATP. Its pathway is amino-acid biosynthesis; L-histidine biosynthesis; L-histidine from 5-phospho-alpha-D-ribose 1-diphosphate: step 1/9. In terms of biological role, catalyzes the condensation of ATP and 5-phosphoribose 1-diphosphate to form N'-(5'-phosphoribosyl)-ATP (PR-ATP). Has a crucial role in the pathway because the rate of histidine biosynthesis seems to be controlled primarily by regulation of HisG enzymatic activity. The chain is ATP phosphoribosyltransferase from Rubrobacter xylanophilus (strain DSM 9941 / JCM 11954 / NBRC 16129 / PRD-1).